Reading from the N-terminus, the 350-residue chain is Galactokinase (350 aa).

14 to 17 (EHTD) contacts substrate. Residues S46 and 98 to 104 (GSGLSSS) contribute to the ATP site. Positions 104 and 136 each coordinate Mg(2+). Catalysis depends on D148, which acts as the Proton acceptor. Y197 is a binding site for substrate.

It belongs to the GHMP kinase family. GalK subfamily.

Its subcellular location is the cytoplasm. The catalysed reaction is alpha-D-galactose + ATP = alpha-D-galactose 1-phosphate + ADP + H(+). Its pathway is carbohydrate metabolism; galactose metabolism. Its function is as follows. Catalyzes the transfer of the gamma-phosphate of ATP to D-galactose to form alpha-D-galactose-1-phosphate (Gal-1-P). This chain is Galactokinase, found in Thermococcus kodakarensis (strain ATCC BAA-918 / JCM 12380 / KOD1) (Pyrococcus kodakaraensis (strain KOD1)).